The sequence spans 494 residues: WD repeat-containing protein 37 (494 aa).

Polar residues-rich tracts occupy residues M1–Q13 and S22–S31. A disordered region spans residues M1–L50. Residues E32–D47 are compositionally biased toward basic and acidic residues. WD repeat units follow at residues G154 to K194 and G197 to Q236. The tract at residues P237–S265 is disordered. Residues G245–V263 show a composition bias toward acidic residues. WD repeat units follow at residues S279–S318, G321–V360, G365–A403, R406–L445, and G452–E493.

As to quaternary structure, forms homodimers. Interacts with PACS1. Interacts with PACS2.

The protein resides in the cytoplasm. It is found in the nucleus. Its function is as follows. Required for normal ER Ca2+ handling in lymphocytes. Together with PACS1, it plays an essential role in stabilizing peripheral lymphocyte populations. In Homo sapiens (Human), this protein is WD repeat-containing protein 37 (WDR37).